The chain runs to 188 residues: Crossover junction endodeoxyribonuclease RuvC (188 aa).

Active-site residues include Asp7, Glu68, and Asp141. Mg(2+) is bound by residues Asp7, Glu68, and Asp141.

Belongs to the RuvC family. Homodimer which binds Holliday junction (HJ) DNA. The HJ becomes 2-fold symmetrical on binding to RuvC with unstacked arms; it has a different conformation from HJ DNA in complex with RuvA. In the full resolvosome a probable DNA-RuvA(4)-RuvB(12)-RuvC(2) complex forms which resolves the HJ. Mg(2+) serves as cofactor.

It is found in the cytoplasm. The enzyme catalyses Endonucleolytic cleavage at a junction such as a reciprocal single-stranded crossover between two homologous DNA duplexes (Holliday junction).. Its function is as follows. The RuvA-RuvB-RuvC complex processes Holliday junction (HJ) DNA during genetic recombination and DNA repair. Endonuclease that resolves HJ intermediates. Cleaves cruciform DNA by making single-stranded nicks across the HJ at symmetrical positions within the homologous arms, yielding a 5'-phosphate and a 3'-hydroxyl group; requires a central core of homology in the junction. The consensus cleavage sequence is 5'-(A/T)TT(C/G)-3'. Cleavage occurs on the 3'-side of the TT dinucleotide at the point of strand exchange. HJ branch migration catalyzed by RuvA-RuvB allows RuvC to scan DNA until it finds its consensus sequence, where it cleaves and resolves the cruciform DNA. This is Crossover junction endodeoxyribonuclease RuvC from Mycobacterium avium (strain 104).